The primary structure comprises 636 residues: Threonine--tRNA ligase (636 aa).

Residues 1–61 enclose the TGS domain; that stretch reads MINITLPDGK…ETDASVVFIT (61 aa). A catalytic region spans residues 238 to 528; it reads DHRKLGTALD…LIEHYAGKFP (291 aa). Cys329, His380, and His505 together coordinate Zn(2+).

The protein belongs to the class-II aminoacyl-tRNA synthetase family. As to quaternary structure, homodimer. Requires Zn(2+) as cofactor.

Its subcellular location is the cytoplasm. It catalyses the reaction tRNA(Thr) + L-threonine + ATP = L-threonyl-tRNA(Thr) + AMP + diphosphate + H(+). Catalyzes the attachment of threonine to tRNA(Thr) in a two-step reaction: L-threonine is first activated by ATP to form Thr-AMP and then transferred to the acceptor end of tRNA(Thr). Also edits incorrectly charged L-seryl-tRNA(Thr). The chain is Threonine--tRNA ligase from Desulfatibacillum aliphaticivorans.